Reading from the N-terminus, the 826-residue chain is Capsid-associated protein Vp91 (826 aa).

The signal sequence occupies residues Met1–Val18. The segment at Cys147 to Cys196 adopts a C2HC BV-type zinc-finger fold. 2 disulfide bridges follow: Cys207–Cys220 and Cys260–Cys273. Asn210 is a glycosylation site (N-linked (GlcNAc...) asparagine; by host). Residues Asn223–Phe281 enclose the Chitin-binding type-2 domain. N-linked (GlcNAc...) asparagine; by host glycosylation is found at Asn333, Asn371, Asn413, Asn510, Asn520, and Asn609. Residues Gly651 to Val679 form a disordered region. A compositionally biased stretch (acidic residues) spans Ser668–Pro677. Asn722 carries an N-linked (GlcNAc...) asparagine; by host glycan.

It localises to the virion. In terms of biological role, probable capsid-associated protein. This chain is Capsid-associated protein Vp91, found in Epiphyas postvittana nucleopolyhedrovirus (EppoMNPV).